Consider the following 126-residue polypeptide: uncharacterized protein (126 aa).

The region spanning 8-106 is the HTH hxlR-type domain; it reads ISVEATLEVI…WGANHINRVY (99 aa).

This is an uncharacterized protein from Bacillus subtilis (strain 168).